A 148-amino-acid polypeptide reads, in one-letter code: Histone H2A-like 3 (148 aa).

The disordered stretch occupies residues aspartate 101 to valine 128. The span at proline 111–methionine 127 shows a compositional bias: acidic residues.

The protein belongs to the histone H2A family. As to quaternary structure, the nucleosome is a histone octamer containing two molecules each of H2A, H2B, H3 and H4 assembled in one H3-H4 heterotetramer and two H2A-H2B heterodimers. The octamer wraps approximately 147 bp of DNA.

It is found in the nucleus. The protein resides in the chromosome. Its function is as follows. Core component of nucleosome. Nucleosomes wrap and compact DNA into chromatin, limiting DNA accessibility to the cellular machineries which require DNA as a template. Histones thereby play a central role in transcription regulation, DNA repair, DNA replication and chromosomal stability. DNA accessibility is regulated via a complex set of post-translational modifications of histones, also called histone code, and nucleosome remodeling. This chain is Histone H2A-like 3, found in Homo sapiens (Human).